A 137-amino-acid polypeptide reads, in one-letter code: ATP synthase epsilon chain (137 aa).

It belongs to the ATPase epsilon chain family. As to quaternary structure, F-type ATPases have 2 components, CF(1) - the catalytic core - and CF(0) - the membrane proton channel. CF(1) has five subunits: alpha(3), beta(3), gamma(1), delta(1), epsilon(1). CF(0) has three main subunits: a, b and c.

Its subcellular location is the cell membrane. Functionally, produces ATP from ADP in the presence of a proton gradient across the membrane. The sequence is that of ATP synthase epsilon chain from Syntrophomonas wolfei subsp. wolfei (strain DSM 2245B / Goettingen).